The chain runs to 354 residues: Annexin A13 (354 aa).

4 Annexin repeats span residues 26 to 97, 98 to 177, 203 to 275, and 279 to 350; these read NDPN…MLLT, DTDK…ALLQ, NLVE…LTLN, and NRPK…ALIG. Residues Met39, Gly41, Gly43, Thr44, Glu46, Glu83, Met111, Gly113, Gly115, Glu118, Asp163, Asp265, Met292, Gly294, Leu295, Gly296, and Glu336 each coordinate Ca(2+).

The protein belongs to the annexin family. As to quaternary structure, homodimer.

The protein localises to the tegument. The protein resides in the secreted. Its subcellular location is the extracellular exosome. It localises to the host cell. Its function is as follows. Involved in reproduction of the worm. Involved in host-parasite interaction. Delivered into the host cell by means of parasite exosomes. Binds to acidic phospholipid membranes in a calcium-dependent manner in vitro. Causes aggregation of liposomes in the presence of calcium, but not in its absence. Likely to promote membrane fusion. May provide structural integrity within the tegument. The protein is Annexin A13 of Schistosoma japonicum (Blood fluke).